Here is a 255-residue protein sequence, read N- to C-terminus: 1-(5-phosphoribosyl)-5-[(5-phosphoribosylamino)methylideneamino] imidazole-4-carboxamide isomerase (255 aa).

Catalysis depends on aspartate 8, which acts as the Proton acceptor. Aspartate 129 acts as the Proton donor in catalysis.

It belongs to the HisA/HisF family.

The protein localises to the cytoplasm. The catalysed reaction is 1-(5-phospho-beta-D-ribosyl)-5-[(5-phospho-beta-D-ribosylamino)methylideneamino]imidazole-4-carboxamide = 5-[(5-phospho-1-deoxy-D-ribulos-1-ylimino)methylamino]-1-(5-phospho-beta-D-ribosyl)imidazole-4-carboxamide. It functions in the pathway amino-acid biosynthesis; L-histidine biosynthesis; L-histidine from 5-phospho-alpha-D-ribose 1-diphosphate: step 4/9. The polypeptide is 1-(5-phosphoribosyl)-5-[(5-phosphoribosylamino)methylideneamino] imidazole-4-carboxamide isomerase (Prochlorococcus marinus subsp. pastoris (strain CCMP1986 / NIES-2087 / MED4)).